Consider the following 336-residue polypeptide: Heme A synthase (336 aa).

8 helical membrane-spanning segments follow: residues 5 to 25, 92 to 112, 117 to 137, 153 to 173, 191 to 211, 253 to 273, 284 to 304, and 307 to 327; these read LTRW…VGGI, GRAT…KGII, ILSY…GWYM, LAFH…KLVK, LIFS…GALV, FIHR…IISL, VAFY…ITLL, and VPII…SVVI. Histidine 255 serves as a coordination point for heme. Histidine 315 provides a ligand contact to heme.

The protein belongs to the COX15/CtaA family. Type 2 subfamily. As to quaternary structure, interacts with CtaB. It depends on heme b as a cofactor.

Its subcellular location is the cell membrane. The enzyme catalyses Fe(II)-heme o + 2 A + H2O = Fe(II)-heme a + 2 AH2. The protein operates within porphyrin-containing compound metabolism; heme A biosynthesis; heme A from heme O: step 1/1. Its function is as follows. Catalyzes the conversion of heme O to heme A by two successive hydroxylations of the methyl group at C8. The first hydroxylation forms heme I, the second hydroxylation results in an unstable dihydroxymethyl group, which spontaneously dehydrates, resulting in the formyl group of heme A. The polypeptide is Heme A synthase (Rickettsia bellii (strain RML369-C)).